The sequence spans 273 residues: WIMGHMVNAIYQIDEFVNLGANSIETDVSFDDNANPEYTYHGIPCDCGRSCLKWENYNDFLKGLRSATTPGNSKYQSKLILVVFDLKTGSLYDNQASEAGKKLAKNLLKHYWNNGNNGGRAYIVLSIPDLNHYPLIKGFTDTLKQEGHPELLEKVGYDFSGNDAIGDVAKAYKKAGVSGHVWQSDGITNCLLRGLSRVKDAVANRDSGKGYINKVYYWTVDKRATTRDALDAGVDGVMTNYPDVIADVMNEAAYKNKVRLATYEDSPWVTFRK.

His-5 is a catalytic residue. Mg(2+)-binding residues include Glu-25 and Asp-27. The Nucleophile role is filled by His-41. 2 disulfides stabilise this stretch: Cys-45-Cys-51 and Cys-47-Cys-190. Position 85 (Asp-85) interacts with Mg(2+).

It belongs to the arthropod phospholipase D family. Class II subfamily. Mg(2+) serves as cofactor. In terms of tissue distribution, expressed by the venom gland.

It is found in the secreted. The catalysed reaction is an N-(acyl)-sphingosylphosphocholine = an N-(acyl)-sphingosyl-1,3-cyclic phosphate + choline. It carries out the reaction an N-(acyl)-sphingosylphosphoethanolamine = an N-(acyl)-sphingosyl-1,3-cyclic phosphate + ethanolamine. The enzyme catalyses a 1-acyl-sn-glycero-3-phosphocholine = a 1-acyl-sn-glycero-2,3-cyclic phosphate + choline. It catalyses the reaction a 1-acyl-sn-glycero-3-phosphoethanolamine = a 1-acyl-sn-glycero-2,3-cyclic phosphate + ethanolamine. Functionally, dermonecrotic toxins cleave the phosphodiester linkage between the phosphate and headgroup of certain phospholipids (sphingolipid and lysolipid substrates), forming an alcohol (often choline) and a cyclic phosphate. This toxin acts on sphingomyelin (SM). It may also act on ceramide phosphoethanolamine (CPE), lysophosphatidylcholine (LPC) and lysophosphatidylethanolamine (LPE), but not on lysophosphatidylserine (LPS), and lysophosphatidylglycerol (LPG). It acts by transphosphatidylation, releasing exclusively cyclic phosphate products as second products. Induces dermonecrosis, hemolysis, increased vascular permeability, edema, inflammatory response, and platelet aggregation. This chain is Dermonecrotic toxin LhSicTox-alphaIA2biv, found in Loxosceles hirsuta (Recluse spider).